The following is a 192-amino-acid chain: dTTP/UTP pyrophosphatase (192 aa).

Residue aspartate 75 is the Proton acceptor of the active site.

Belongs to the Maf family. YhdE subfamily. The cofactor is a divalent metal cation.

It is found in the cytoplasm. It carries out the reaction dTTP + H2O = dTMP + diphosphate + H(+). The enzyme catalyses UTP + H2O = UMP + diphosphate + H(+). Its function is as follows. Nucleoside triphosphate pyrophosphatase that hydrolyzes dTTP and UTP. May have a dual role in cell division arrest and in preventing the incorporation of modified nucleotides into cellular nucleic acids. The chain is dTTP/UTP pyrophosphatase from Bdellovibrio bacteriovorus (strain ATCC 15356 / DSM 50701 / NCIMB 9529 / HD100).